Here is a 154-residue protein sequence, read N- to C-terminus: Protein X (154 aa).

The mitochondrial targeting sequence stretch occupies residues proline 68 to phenylalanine 117.

Belongs to the orthohepadnavirus protein X family. As to quaternary structure, may form homodimer. May interact with host CEBPA, CFLAR, CREB1, DDB1, E4F1, HBXIP, HSPD1/HSP60, NFKBIA, POLR2E and SMAD4. Interacts with host SMC5-SMC6 complex and induces its degradation. Interacts with host TRPC4AP; leading to prevent ubiquitination of TRPC4AP. Interacts with host PLSCR1; this interaction promotes ubiquitination and degradation of HBx and impairs HBx-mediated cell proliferation. Post-translationally, a fraction may be phosphorylated in insect cells and HepG2 cells, a human hepatoblastoma cell line. Phosphorylated in vitro by host protein kinase C or mitogen-activated protein kinase. N-acetylated in insect cells.

It is found in the host cytoplasm. The protein resides in the host nucleus. The protein localises to the host mitochondrion. In terms of biological role, multifunctional protein that plays a role in silencing host antiviral defenses and promoting viral transcription. Does not seem to be essential for HBV infection. May be directly involved in development of cirrhosis and liver cancer (hepatocellular carcinoma). Most of cytosolic activities involve modulation of cytosolic calcium. The effect on apoptosis is controversial depending on the cell types in which the studies have been conducted. May induce apoptosis by localizing in mitochondria and causing loss of mitochondrial membrane potential. May also modulate apoptosis by binding host CFLAR, a key regulator of the death-inducing signaling complex (DISC). Promotes viral transcription by using the host E3 ubiquitin ligase DDB1 to target the SMC5-SMC6 complex to proteasomal degradation. This host complex would otherwise bind to viral episomal DNA, and prevents its transcription. Moderately stimulates transcription of many different viral and cellular transcription elements. Promoters and enhancers stimulated by HBx contain DNA binding sites for NF-kappa-B, AP-1, AP-2, c-EBP, ATF/CREB, or the calcium-activated factor NF-AT. The protein is Protein X of Hepatitis B virus genotype E (isolate Chimpanzee/Ch195/1999) (HBV-E).